A 603-amino-acid chain; its full sequence is Elongation factor 4 (603 aa).

A tr-type G domain is found at 7–189 (SRIRNFSIIA…SIVHLVPPPQ (183 aa)). Residues 19–24 (DHGKST) and 136–139 (NKID) contribute to the GTP site.

The protein belongs to the TRAFAC class translation factor GTPase superfamily. Classic translation factor GTPase family. LepA subfamily.

Its subcellular location is the cell inner membrane. It catalyses the reaction GTP + H2O = GDP + phosphate + H(+). Its function is as follows. Required for accurate and efficient protein synthesis under certain stress conditions. May act as a fidelity factor of the translation reaction, by catalyzing a one-codon backward translocation of tRNAs on improperly translocated ribosomes. Back-translocation proceeds from a post-translocation (POST) complex to a pre-translocation (PRE) complex, thus giving elongation factor G a second chance to translocate the tRNAs correctly. Binds to ribosomes in a GTP-dependent manner. In Rippkaea orientalis (strain PCC 8801 / RF-1) (Cyanothece sp. (strain PCC 8801)), this protein is Elongation factor 4.